Consider the following 62-residue polypeptide: Large ribosomal subunit protein bL28 (62 aa).

The disordered stretch occupies residues 1 to 26 (MARKCYVTGKSPKSGNNRSHALNKTK). Over residues 11–20 (SPKSGNNRSH) the composition is skewed to polar residues.

It belongs to the bacterial ribosomal protein bL28 family.

The polypeptide is Large ribosomal subunit protein bL28 (Exiguobacterium sp. (strain ATCC BAA-1283 / AT1b)).